The following is a 218-amino-acid chain: Octanoyltransferase (218 aa).

The 176-residue stretch at 31 to 206 (REAGDEVWLV…QLVKHLDYAE (176 aa)) folds into the BPL/LPL catalytic domain. Substrate is bound by residues 70 to 77 (RGGQVTYH), 137 to 139 (SLG), and 150 to 152 (GLA). Cys-168 acts as the Acyl-thioester intermediate in catalysis.

This sequence belongs to the LipB family.

It is found in the cytoplasm. The catalysed reaction is octanoyl-[ACP] + L-lysyl-[protein] = N(6)-octanoyl-L-lysyl-[protein] + holo-[ACP] + H(+). It participates in protein modification; protein lipoylation via endogenous pathway; protein N(6)-(lipoyl)lysine from octanoyl-[acyl-carrier-protein]: step 1/2. Catalyzes the transfer of endogenously produced octanoic acid from octanoyl-acyl-carrier-protein onto the lipoyl domains of lipoate-dependent enzymes. Lipoyl-ACP can also act as a substrate although octanoyl-ACP is likely to be the physiological substrate. In Pseudomonas syringae pv. tomato (strain ATCC BAA-871 / DC3000), this protein is Octanoyltransferase.